Consider the following 381-residue polypeptide: 40-kDa huntingtin-associated protein (381 aa).

Ala2 is modified (N-acetylalanine). The short motif at 34–36 is the Nuclear localization signal element; that stretch reads KKR. Residues 221-265 are disordered; that stretch reads QLELLPQPPSGPQPPLSGPQPRPVLGSTLPLPQPPDHAPGSVAPS. Pro residues predominate over residues 226-242; that stretch reads PQPPSGPQPPLSGPQPR.

Interacts with HTT (via C-terminus). Interacts with RAB5A. Found in a complex with F8A1/F8A2/F8A3, HTT and RAB5A; mediates the recruitment of HTT by RAB5A onto early endosomes. As to expression, produced abundantly in a wide variety of cell types.

It localises to the cytoplasm. The protein resides in the nucleus. It is found in the early endosome. The protein localises to the nuclear body. In terms of biological role, RAB5A effector molecule that is involved in vesicular trafficking of early endosomes. Mediates the recruitment of HTT by RAB5A onto early endosomes. The HTT-F8A1/F8A2/F8A3-RAB5A complex stimulates early endosomal interaction with actin filaments and inhibits interaction with microtubules, leading to the reduction of endosome motility. The sequence is that of 40-kDa huntingtin-associated protein (F8a1) from Mus musculus (Mouse).